The primary structure comprises 510 residues: NAD(P)H-quinone oxidoreductase subunit 2 B, chloroplastic (510 aa).

A run of 13 helical transmembrane segments spans residues 24-44, 57-77, 99-119, 124-144, 150-170, 183-203, 229-249, 295-315, 323-343, 354-374, 395-415, 418-438, and 484-504; these read LLLFHGSFIFPECILIFGLIL, IPWLYFISSTSLVMSITALLF, IFQFLILLCSTLCIPLSVEYI, MAITEFLLFVLTATLGGMFLC, ITIFVAPECFSLCSYLLSGYT, YLLMGGASSSILVHGFSWLYG, ISIALIFITVGIGFKLSPAPF, WHLLLEILAILSMILGNLIAI, MLAYSSIGQIGYVIIGIIVGD, YMLFYISMNLGTFARIVLFGL, ALSSALCLLSLGGLPPLAGFF, LHLFWCGWQAGLYFLVSIGLL, and MIVCVIASTIPGISMNPIIAI.

Belongs to the complex I subunit 2 family. In terms of assembly, NDH is composed of at least 16 different subunits, 5 of which are encoded in the nucleus.

The protein resides in the plastid. It is found in the chloroplast thylakoid membrane. The catalysed reaction is a plastoquinone + NADH + (n+1) H(+)(in) = a plastoquinol + NAD(+) + n H(+)(out). It catalyses the reaction a plastoquinone + NADPH + (n+1) H(+)(in) = a plastoquinol + NADP(+) + n H(+)(out). NDH shuttles electrons from NAD(P)H:plastoquinone, via FMN and iron-sulfur (Fe-S) centers, to quinones in the photosynthetic chain and possibly in a chloroplast respiratory chain. The immediate electron acceptor for the enzyme in this species is believed to be plastoquinone. Couples the redox reaction to proton translocation, and thus conserves the redox energy in a proton gradient. The polypeptide is NAD(P)H-quinone oxidoreductase subunit 2 B, chloroplastic (Drimys granadensis).